The primary structure comprises 822 residues: Putative pentatricopeptide repeat-containing protein At5g13230, mitochondrial (822 aa).

The N-terminal 70 residues, 1–70 (MIVFMRIIHV…QKNDPISAKA (70 aa)), are a transit peptide targeting the mitochondrion. 16 PPR repeats span residues 48 to 82 (DSHAYGAMLRRCIQKNDPISAKAIHCDILKKGSCL), 83 to 117 (DLFATNILLNAYVKAGFDKDALNLFDEMPERNNVS), 145 to 179 (NPHVFTSFLKLFVSLDKAEICPWLHSPIVKLGYDS), 180 to 210 (NAFVGAALINAYSVCGSVDSARTVFEGILCK), 211 to 245 (DIVVWAGIVSCYVENGYFEDSLKLLSCMRMAGFMP), 246 to 280 (NNYTFDTALKASIGLGAFDFAKGVHGQILKTCYVL), 281 to 311 (DPRVGVGLLQLYTQLGDMSDAFKVFNEMPKN), 312 to 346 (DVVPWSFMIARFCQNGFCNEAVDLFIRMREAFVVP), 347 to 381 (NEFTLSSILNGCAIGKCSGLGEQLHGLVVKVGFDL), 382 to 416 (DIYVSNALIDVYAKCEKMDTAVKLFAELSSKNEVS), 417 to 447 (WNTVIVGYENLGEGGKAFSMFREALRNQVSV), 448 to 482 (TEVTFSSALGACASLASMDLGVQVHGLAIKTNNAK), 483 to 513 (KVAVSNSLIDMYAKCGDIKFAQSVFNEMETI), 514 to 548 (DVASWNALISGYSTHGLGRQALRILDIMKDRDCKP), 549 to 584 (NGLTFLGVLSGCSNAGLIDQGQECFESMIRDHGIEP), and 585 to 619 (CLEHYTCMVRLLGRSGQLDKAMKLIEGIPYEPSVM). Positions 620–695 (IWRAMLSASM…EPGLSWIEHQ (76 aa)) are type E motif. The type E(+) motif stretch occupies residues 696-726 (GDVHYFSVGLSDHPDMKLINGMLEWLNMKAT). Residues 727 to 822 (RAGYVPDRNA…AGVCSCGDHW (96 aa)) form a type DYW motif region.

This sequence belongs to the PPR family. PCMP-H subfamily.

It is found in the mitochondrion. The sequence is that of Putative pentatricopeptide repeat-containing protein At5g13230, mitochondrial (PCMP-H89) from Arabidopsis thaliana (Mouse-ear cress).